Consider the following 438-residue polypeptide: NADH-quinone oxidoreductase subunit D (438 aa).

This sequence belongs to the complex I 49 kDa subunit family. NDH-1 is composed of 14 different subunits. Subunits NuoB, C, D, E, F, and G constitute the peripheral sector of the complex.

The protein resides in the cell membrane. It catalyses the reaction a quinone + NADH + 5 H(+)(in) = a quinol + NAD(+) + 4 H(+)(out). In terms of biological role, NDH-1 shuttles electrons from NADH, via FMN and iron-sulfur (Fe-S) centers, to quinones in the respiratory chain. The immediate electron acceptor for the enzyme in this species is believed to be a menaquinone. Couples the redox reaction to proton translocation (for every two electrons transferred, four hydrogen ions are translocated across the cytoplasmic membrane), and thus conserves the redox energy in a proton gradient. The polypeptide is NADH-quinone oxidoreductase subunit D (Rhodococcus jostii (strain RHA1)).